A 56-amino-acid polypeptide reads, in one-letter code: Metallothionein (56 aa).

Positions 9, 11, 14, 16, 32, 36, 40, 47, 49, 52, and 54 each coordinate Zn(2+).

The protein belongs to the metallothionein superfamily. Type 14 family.

In terms of biological role, may play a role in essential metal ion homeostasis (especially zinc homeostasis) and resistance to certain non-essential metal ions. Binds four zinc ions. This Synechococcus elongatus (strain ATCC 33912 / PCC 7942 / FACHB-805) (Anacystis nidulans R2) protein is Metallothionein (smtA).